The following is a 185-amino-acid chain: Ribosome-recycling factor (185 aa).

The protein belongs to the RRF family.

The protein resides in the cytoplasm. Its function is as follows. Responsible for the release of ribosomes from messenger RNA at the termination of protein biosynthesis. May increase the efficiency of translation by recycling ribosomes from one round of translation to another. In Streptococcus uberis (strain ATCC BAA-854 / 0140J), this protein is Ribosome-recycling factor.